The sequence spans 342 residues: Aristolochene synthase (342 aa).

The Mg(2+) site is built by Asp115, Asn244, Ser248, and Glu252. Arg340 and Tyr341 together coordinate (2E,6E)-farnesyl diphosphate.

This sequence belongs to the terpene synthase family. As to quaternary structure, homodimer. The cofactor is Mg(2+).

The enzyme catalyses (2E,6E)-farnesyl diphosphate = (+)-aristolochene + diphosphate. Its pathway is sesquiterpene biosynthesis; aristolochene biosynthesis; aristolochene from farnesyl diphosphate: step 1/1. Functionally, aristolochene synthase; part of the gene cluster that mediates the biosynthesis of PR-toxin, a bicyclic sesquiterpene belonging to the eremophilane class and acting as a mycotoxin. The first step of the pathway is catalyzed by the aristolochene synthase which performs the cyclization of trans,trans-farnesyl diphosphate (FPP) to the bicyclic sesquiterpene aristolochene. Following the formation of aristolochene, the non-oxygenated aristolochene is converted to the trioxygenated intermediate eremofortin B, via 7-epi-neopetasone. This conversion appears to involve three enzymes, a hydroxysterol oxidase-like enzyme, the quinone-oxidase prx3 that forms the quinone-type-structure in the bicyclic nucleus of aristolochene with the C8-oxo group and the C-3 hydroxyl group, and the P450 monooxygenase ORF6 that introduces the epoxide at the double bond between carbons 1 and 2. No monoxy or dioxy-intermediates have been reported to be released to the broth, so these three early oxidative reactions may be coupled together. Eremofortin B is further oxidized by another P450 monooxygenase, that introduces a second epoxide between carbons 7 and 11 prior to acetylation to eremofortin A by the acetyltransferase ORF8. The second epoxidation may be performed by a second P450 monooxygenase. After the acetylation step, eremofortin A is converted to eremofortin C and then to PR-toxin. First the conversion of eremofortin A to eremofortin C proceeds by oxidation of the side chain of the molecule at C-12 and is catalyzed by the short-chain oxidoreductase prx1. The cytochrome P450 monooxygenase ORF5 also plays a role in this step. The primary alcohol formed at C-12 is finally oxidized by the short-chain alcohol dehydrogenase prx4 that forms PR-toxin. This is Aristolochene synthase from Penicillium roqueforti (strain FM164).